We begin with the raw amino-acid sequence, 389 residues long: Shewanella-like protein phosphatase 1 (389 aa).

A chloroplast-targeting transit peptide spans M1 to S53. Mn(2+)-binding residues include D64, H66, D102, and N137. The active-site Proton donor is H138. H242 and H314 together coordinate Mn(2+).

It belongs to the metallophosphoesterase superfamily. SLP family. Requires Mn(2+) as cofactor. In terms of tissue distribution, expressed in rosettes leaves, shoots and flowers (at protein level).

It localises to the plastid. It is found in the chloroplast. Its function is as follows. Shows phosphatase activity, hydrolyzing the artificial substrate para-nitrophenylphosphate (pNPP) in vitro. The polypeptide is Shewanella-like protein phosphatase 1 (Arabidopsis thaliana (Mouse-ear cress)).